We begin with the raw amino-acid sequence, 786 residues long: LPS-assembly protein LptD (786 aa).

The N-terminal stretch at 1 to 39 is a signal peptide; sequence MPPKPLFPNVFPGDGAPRKRRLALALLAVPGLVPAVSYA. Residues 767 to 786 form a disordered region; that stretch reads PGYTPLPPPPPPMSRFSNYE. Residues 770 to 779 show a composition bias toward pro residues; it reads TPLPPPPPPM.

It belongs to the LptD family. In terms of assembly, component of the lipopolysaccharide transport and assembly complex. Interacts with LptE and LptA.

Its subcellular location is the cell outer membrane. In terms of biological role, together with LptE, is involved in the assembly of lipopolysaccharide (LPS) at the surface of the outer membrane. The chain is LPS-assembly protein LptD from Burkholderia cenocepacia (strain HI2424).